The sequence spans 138 residues: Phosphoribosyl-AMP cyclohydrolase (138 aa).

Residue Asp-85 coordinates Mg(2+). A Zn(2+)-binding site is contributed by Cys-86. Residues Asp-87 and Asp-89 each coordinate Mg(2+). Positions 102 and 109 each coordinate Zn(2+).

Belongs to the PRA-CH family. In terms of assembly, homodimer. The cofactor is Mg(2+). Zn(2+) is required as a cofactor.

The protein localises to the cytoplasm. The catalysed reaction is 1-(5-phospho-beta-D-ribosyl)-5'-AMP + H2O = 1-(5-phospho-beta-D-ribosyl)-5-[(5-phospho-beta-D-ribosylamino)methylideneamino]imidazole-4-carboxamide. Its pathway is amino-acid biosynthesis; L-histidine biosynthesis; L-histidine from 5-phospho-alpha-D-ribose 1-diphosphate: step 3/9. Catalyzes the hydrolysis of the adenine ring of phosphoribosyl-AMP. In Methanothermobacter thermautotrophicus (strain ATCC 29096 / DSM 1053 / JCM 10044 / NBRC 100330 / Delta H) (Methanobacterium thermoautotrophicum), this protein is Phosphoribosyl-AMP cyclohydrolase.